A 432-amino-acid chain; its full sequence is Phosphomethylpyrimidine synthase (432 aa).

Substrate is bound by residues asparagine 66, methionine 95, tyrosine 124, histidine 163, 185-187 (SRG), 226-229 (DGLR), and glutamate 265. Histidine 269 contributes to the Zn(2+) binding site. Tyrosine 292 is a binding site for substrate. Histidine 333 provides a ligand contact to Zn(2+). The [4Fe-4S] cluster site is built by cysteine 409, cysteine 412, and cysteine 416.

Belongs to the ThiC family. It depends on [4Fe-4S] cluster as a cofactor.

It catalyses the reaction 5-amino-1-(5-phospho-beta-D-ribosyl)imidazole + S-adenosyl-L-methionine = 4-amino-2-methyl-5-(phosphooxymethyl)pyrimidine + CO + 5'-deoxyadenosine + formate + L-methionine + 3 H(+). Its pathway is cofactor biosynthesis; thiamine diphosphate biosynthesis. In terms of biological role, catalyzes the synthesis of the hydroxymethylpyrimidine phosphate (HMP-P) moiety of thiamine from aminoimidazole ribotide (AIR) in a radical S-adenosyl-L-methionine (SAM)-dependent reaction. The protein is Phosphomethylpyrimidine synthase of Moorella thermoacetica (strain ATCC 39073 / JCM 9320).